Reading from the N-terminus, the 500-residue chain is Prostacyclin synthase (500 aa).

Residues 1–20 (MAWAALLGLLAALLLLLLLS) form a helical membrane-spanning segment. Residues Arg106, Leu112, Asn287, 358 to 359 (TR), and Arg382 contribute to the substrate site. Cys441 lines the heme pocket.

Belongs to the cytochrome P450 family. The cofactor is heme. Widely expressed; particularly abundant in ovary, heart, skeletal muscle, lung and prostate.

Its subcellular location is the endoplasmic reticulum membrane. It carries out the reaction prostaglandin H2 = prostaglandin I2. It catalyses the reaction a hydroperoxyeicosatetraenoate = an oxoeicosatetraenoate + H2O. The catalysed reaction is (15S)-hydroperoxy-(5Z,8Z,11Z,13E)-eicosatetraenoate = 15-oxo-(5Z,8Z,11Z,13E)-eicosatetraenoate + H2O. The enzyme catalyses (15S)-hydroperoxy-(5Z,8Z,11Z,13E)-eicosatetraenoate + AH2 = (15S)-hydroxy-(5Z,8Z,11Z,13E)-eicosatetraenoate + A + H2O. Catalyzes the biosynthesis and metabolism of eicosanoids. Catalyzes the isomerization of prostaglandin H2 to prostacyclin (= prostaglandin I2), a potent mediator of vasodilation and inhibitor of platelet aggregation. Additionally, displays dehydratase activity, toward hydroperoxyeicosatetraenoates (HPETEs), especially toward (15S)-hydroperoxy-(5Z,8Z,11Z,13E)-eicosatetraenoate (15(S)-HPETE). In Homo sapiens (Human), this protein is Prostacyclin synthase (PTGIS).